The chain runs to 341 residues: Fructose-1,6-bisphosphatase, cytosolic (341 aa).

Residues Glu-71, Glu-100, Asp-121, Leu-123, and Asp-124 each contribute to the Mg(2+) site. Residues 124–127 (DGSF), Asn-215, Tyr-247, Tyr-267, and Lys-277 contribute to the substrate site. Glu-283 provides a ligand contact to Mg(2+).

This sequence belongs to the FBPase class 1 family. It depends on Mg(2+) as a cofactor.

Its subcellular location is the cytoplasm. It catalyses the reaction beta-D-fructose 1,6-bisphosphate + H2O = beta-D-fructose 6-phosphate + phosphate. The polypeptide is Fructose-1,6-bisphosphatase, cytosolic (Pisum sativum (Garden pea)).